The chain runs to 79 residues: Putative membrane protein insertion efficiency factor (79 aa).

Belongs to the UPF0161 family.

The protein localises to the cell inner membrane. Could be involved in insertion of integral membrane proteins into the membrane. The sequence is that of Putative membrane protein insertion efficiency factor from Rippkaea orientalis (strain PCC 8801 / RF-1) (Cyanothece sp. (strain PCC 8801)).